The following is a 169-amino-acid chain: Cell division inhibitor SulA (169 aa).

A ftsZ binding region spans residues 106 to 112 (ALRTGNY). Positions 162-169 (KIHSNLYH) are lon protease binding.

The protein belongs to the SulA family. In terms of assembly, interacts with FtsZ. Is rapidly cleaved and degraded by the Lon protease once DNA damage is repaired.

Component of the SOS system and an inhibitor of cell division. Accumulation of SulA causes rapid cessation of cell division and the appearance of long, non-septate filaments. In the presence of GTP, binds a polymerization-competent form of FtsZ in a 1:1 ratio, thus inhibiting FtsZ polymerization and therefore preventing it from participating in the assembly of the Z ring. This mechanism prevents the premature segregation of damaged DNA to daughter cells during cell division. This chain is Cell division inhibitor SulA, found in Salmonella choleraesuis (strain SC-B67).